The primary structure comprises 599 residues: Serine hydroxymethyltransferase 6 (599 aa).

Positions 1–25 (MDRIAQSDLSLGFGSSHALPLPHPP) are disordered. An N6-(pyridoxal phosphate)lysine modification is found at lysine 374.

Belongs to the SHMT family. Homotetramer. Pyridoxal 5'-phosphate serves as cofactor.

It is found in the cytoplasm. It carries out the reaction (6R)-5,10-methylene-5,6,7,8-tetrahydrofolate + glycine + H2O = (6S)-5,6,7,8-tetrahydrofolate + L-serine. Its pathway is one-carbon metabolism; tetrahydrofolate interconversion. Catalyzes the interconversion of serine and glycine. The polypeptide is Serine hydroxymethyltransferase 6 (SHM6) (Arabidopsis thaliana (Mouse-ear cress)).